Reading from the N-terminus, the 264-residue chain is Teichoic acids export ATP-binding protein TagH (264 aa).

The region spanning 5–243 is the ABC transporter domain; it reads VNIKNVTKEY…YEAFLNDFKK (239 aa). 57–64 is a binding site for ATP; that stretch reads GINGSGKS.

Belongs to the ABC transporter superfamily. Teichoic acids exporter (TC 3.A.1.104.1) family. As to quaternary structure, the complex is composed of two ATP-binding proteins (TagH) and two transmembrane proteins (TagG).

It is found in the cell membrane. It catalyses the reaction ATP + H2O + teichoic acidSide 1 = ADP + phosphate + teichoic acidSide 2.. Its function is as follows. Part of the ABC transporter complex TagGH involved in teichoic acids export. Responsible for energy coupling to the transport system. The protein is Teichoic acids export ATP-binding protein TagH of Staphylococcus aureus (strain Mu50 / ATCC 700699).